Consider the following 211-residue polypeptide: tRNA (guanine-N(7)-)-methyltransferase (211 aa).

Residues Glu-44, Asp-69, Asp-96, and Asp-118 each contribute to the S-adenosyl-L-methionine site. Residue Asp-118 is part of the active site. Lys-122 provides a ligand contact to substrate. Residues 124 to 129 form an interaction with RNA region; it reads KHEKRR. Residues Asp-154 and 191 to 194 each bind substrate; that span reads TEYE.

It belongs to the class I-like SAM-binding methyltransferase superfamily. TrmB family.

The catalysed reaction is guanosine(46) in tRNA + S-adenosyl-L-methionine = N(7)-methylguanosine(46) in tRNA + S-adenosyl-L-homocysteine. It functions in the pathway tRNA modification; N(7)-methylguanine-tRNA biosynthesis. Catalyzes the formation of N(7)-methylguanine at position 46 (m7G46) in tRNA. This chain is tRNA (guanine-N(7)-)-methyltransferase, found in Streptococcus pyogenes serotype M6 (strain ATCC BAA-946 / MGAS10394).